We begin with the raw amino-acid sequence, 197 residues long: Protein SPMIP2 (197 aa).

Residues 161 to 197 (SKAALPIGSRPPKLPKLPKKEEKSKFRPLHQHDARCY) are disordered. Basic and acidic residues predominate over residues 178 to 197 (PKKEEKSKFRPLHQHDARCY).

The chain is Protein SPMIP2 (SPMIP2) from Bos taurus (Bovine).